The chain runs to 193 residues: Adenylate kinase (193 aa).

10 to 18 contacts ATP; it reads GVPGVGGTT.

It belongs to the archaeal adenylate kinase family. Monomer.

It is found in the cytoplasm. The catalysed reaction is AMP + ATP = 2 ADP. This chain is Adenylate kinase, found in Methanococcus aeolicus (strain ATCC BAA-1280 / DSM 17508 / OCM 812 / Nankai-3).